Here is a 274-residue protein sequence, read N- to C-terminus: 2,3,4,5-tetrahydropyridine-2,6-dicarboxylate N-succinyltransferase (274 aa).

Substrate contacts are provided by Arg104 and Asp141.

Belongs to the transferase hexapeptide repeat family. In terms of assembly, homotrimer.

The protein localises to the cytoplasm. It catalyses the reaction (S)-2,3,4,5-tetrahydrodipicolinate + succinyl-CoA + H2O = (S)-2-succinylamino-6-oxoheptanedioate + CoA. It participates in amino-acid biosynthesis; L-lysine biosynthesis via DAP pathway; LL-2,6-diaminopimelate from (S)-tetrahydrodipicolinate (succinylase route): step 1/3. The sequence is that of 2,3,4,5-tetrahydropyridine-2,6-dicarboxylate N-succinyltransferase from Salmonella choleraesuis (strain SC-B67).